Here is a 712-residue protein sequence, read N- to C-terminus: Polyribonucleotide nucleotidyltransferase (712 aa).

Residues aspartate 493 and aspartate 499 each contribute to the Mg(2+) site. The KH domain maps to proline 560–isoleucine 622. The S1 motif domain maps to glycine 632–lysine 700.

The protein belongs to the polyribonucleotide nucleotidyltransferase family. The cofactor is Mg(2+).

It is found in the cytoplasm. It catalyses the reaction RNA(n+1) + phosphate = RNA(n) + a ribonucleoside 5'-diphosphate. Involved in mRNA degradation. Catalyzes the phosphorolysis of single-stranded polyribonucleotides processively in the 3'- to 5'-direction. This Salinibacter ruber (strain DSM 13855 / M31) protein is Polyribonucleotide nucleotidyltransferase.